Here is a 417-residue protein sequence, read N- to C-terminus: Serine hydroxymethyltransferase (417 aa).

(6S)-5,6,7,8-tetrahydrofolate contacts are provided by residues L121 and 125–127 (GHL). K229 bears the N6-(pyridoxal phosphate)lysine mark. (6S)-5,6,7,8-tetrahydrofolate is bound at residue 355–357 (SPF).

Belongs to the SHMT family. As to quaternary structure, homodimer. It depends on pyridoxal 5'-phosphate as a cofactor.

It is found in the cytoplasm. It carries out the reaction (6R)-5,10-methylene-5,6,7,8-tetrahydrofolate + glycine + H2O = (6S)-5,6,7,8-tetrahydrofolate + L-serine. It functions in the pathway one-carbon metabolism; tetrahydrofolate interconversion. The protein operates within amino-acid biosynthesis; glycine biosynthesis; glycine from L-serine: step 1/1. Catalyzes the reversible interconversion of serine and glycine with tetrahydrofolate (THF) serving as the one-carbon carrier. This reaction serves as the major source of one-carbon groups required for the biosynthesis of purines, thymidylate, methionine, and other important biomolecules. Also exhibits THF-independent aldolase activity toward beta-hydroxyamino acids, producing glycine and aldehydes, via a retro-aldol mechanism. The polypeptide is Serine hydroxymethyltransferase (Xylella fastidiosa (strain M23)).